The primary structure comprises 1194 residues: MRTNCWWRLSGYVMRHRRDLLLGFGAALAGTVIAVLVPLVTKRVIDDAIAADHRPLAPWAVVLVAAAGATYLLMYVRRYYGGRIAHLVQHDLRMDAFQALLRWDGRQQDRWSSGQLIVRTTNDLQLVQALLFDVPNVLRHVLTLLLGVAVMTWLSVPLALLAVLLVPVIGLIAHRSRRLLAAATHCAQEHKAAVTGVVDAAVCGIRVVKAFGQEERETVKLVTASRALYAAQLRVARLNAHFGPLLQTLPALGQMAVFALGGWMAAQGSITVGTFVAFWACLTLLARPACDLAGMLTIAQQARAGAVRVLELIDSRPTLVDGTKPLSPEARLSLEFQRVSFGYVADRPVLREISLSVRAGETLAVVGAPGSGKSTLASLATRCYDVTQGAVRIGGQDVRELTLDSLRSAIGLVPEDAVLFSGTIGANIAYGRPDATPEQIATAARAAHIEEFVNTLPDGYQTAVGARGLTLSGGQRQRIALARALLHQPRLLIMDDPTSAVDAVIECGIQEVLREAIADRTAVIFTRRRSMLTLADRVAVLDSGRLLDVGTPDEVWERCPRYRELLSPAPDLADDLVVAERSPVCRPVAGLGTKAAQHTNVHNPGPHDHPPGPDPLRRLLREFRGPLALSLLLVAVQTCAGLLPPLLIRHGIDVGIRRHVLSALWWAALAGTATVVIRWVVQWGSAMVAGYTGEQVLFRLRSVVFAHAQRLGLDAFEDDGDAQIVTAVTADVEAIVAFLRTGLVVAVISVVTLVGILVALLAIRARLVLLIFTTMPVLALATWQFRRASNWTYRRARHRLGTVTATLREYAAGLRIAQAFRAEYRGLQSYFAHSDDYRRLGVRGQRLLALYYPFVALLCSLATTLVLLDGAREVRAGVISVGALVTYLLYIELLYTPIGELAQMFDDYQRAAVAAGRIRSLLSTRTPSSPAARPVGTLRGEVVFDAVHYSYRTREVPALAGINLRIPAGQTVVFVGSTGSGKSTLIKLVARFYDPTHGTVRVDGCDLREFDVDGYRNRLGIVTQEQYVFAGTVRDAIAYGRPDATDAQVERAAREVGAHPMITALDNGYLHQVTAGGRNLSAGQLQLLALARARLVDPDILLLDEATVALDPATEAVVQRATLTLAARRTTLIVAHGLAIAEHADRIVVLEHGTVVEDGAHTELLAAGGHYSRLWAAHTRLCSPEITQLQCIDA.

The next 6 membrane-spanning stretches (helical) occupy residues Leu-20–Val-40, Leu-56–Val-76, Leu-130–Val-150, Trp-153–Ala-173, Phe-258–Phe-278, and Trp-279–Ala-299. Residues Leu-21–Gln-301 form the ABC transmembrane type-1 1 domain. The ABC transporter 1 domain occupies Leu-334 to Pro-568. Gly-367–Ser-374 contributes to the ATP binding site. The next 6 membrane-spanning stretches (helical) occupy residues Ala-628–Ile-648, Val-660–Val-680, Leu-743–Ile-763, Ala-765–Phe-785, Leu-847–Leu-867, and Val-878–Ile-898. One can recognise an ABC transmembrane type-1 2 domain in the interval Ala-628–Arg-910. The 236-residue stretch at Val-942–Ala-1177 folds into the ABC transporter 2 domain. An ATP-binding site is contributed by Gly-976–Ser-983.

It belongs to the ABC transporter superfamily. Lipid exporter (TC 3.A.1.106) family.

The protein resides in the cell inner membrane. Its activity is regulated as follows. Efflux is inhibited by reserpine. Overexpression in M.smegmatis increases resistance to erythromycin, ampicillin, novobiocin and vancomycin. It also reduces accumulation of ethidium bromide in the cell. This chain is Multidrug efflux ATP-binding/permease protein Rv0194, found in Mycobacterium tuberculosis (strain ATCC 25618 / H37Rv).